The sequence spans 179 residues: Cytochrome c-type biogenesis protein CcmE (179 aa).

Over 1 to 8 (MNPRRKSR) the chain is Cytoplasmic. The chain crosses the membrane as a helical; Signal-anchor for type II membrane protein span at residues 9 to 29 (LTIILFVLLGVTIASSLVLYA). Residues 30–179 (LRQNIDLFYT…AVNSVEEGKK (150 aa)) lie on the Periplasmic side of the membrane. Residues H131 and Y135 each contribute to the heme site. 2 stretches are compositionally biased toward basic and acidic residues: residues 138–148 (PDLSEKMEQVH) and 161–179 (ESDR…EGKK). A disordered region spans residues 138–179 (PDLSEKMEQVHKPMGISNQDMQGESDRDRLDKAVNSVEEGKK).

Belongs to the CcmE/CycJ family.

It is found in the cell inner membrane. Heme chaperone required for the biogenesis of c-type cytochromes. Transiently binds heme delivered by CcmC and transfers the heme to apo-cytochromes in a process facilitated by CcmF and CcmH. In Mannheimia succiniciproducens (strain KCTC 0769BP / MBEL55E), this protein is Cytochrome c-type biogenesis protein CcmE.